Reading from the N-terminus, the 1522-residue chain is Myosin-15 (1522 aa).

Residues arginine 12 to proline 61 form the Myosin N-terminal SH3-like domain. A Myosin motor domain is found at asparagine 67–alanine 737. Residues glycine 161 to threonine 168 and asparagine 214 to lysine 222 each bind ATP. 4 actin-binding regions span residues leucine 499–phenylalanine 533, phenylalanine 535–valine 558, phenylalanine 593–leucine 618, and leucine 618–serine 640. IQ domains are found at residues alanine 763–alanine 792, asparagine 788–valine 817, leucine 811–alanine 840, glutamate 836–alanine 865, and arginine 859–glutamate 888. Positions alanine 889–isoleucine 1059 form a coiled coil. The 293-residue stretch at asparagine 1164 to lysine 1456 folds into the Dilute domain.

Belongs to the TRAFAC class myosin-kinesin ATPase superfamily. Myosin family. Plant myosin class XI subfamily. Homodimer. Interacts with MYOB1 and MYOB7. Interacts with WIT1 and WIT2. Core component of the LINC complex which is composed of inner nuclear membrane SUN domain-containing proteins coupled to outer nuclear membrane WIP and WIT proteins. The LINC complex also involves nucleoskeletal proteins CRWN/LINC and possibly KAKU4 and the cytoskeletal myosin KAKU1.

It is found in the cytoplasm. The protein resides in the nucleus membrane. In terms of biological role, myosin heavy chain that is required for the cell cycle-regulated transport of various organelles and proteins for their segregation. Functions by binding with its tail domain to receptor proteins on organelles and exerting force with its N-terminal motor domain against actin filaments, thereby transporting its cargo along polarized actin cables. Involved in trafficking of Golgi stacks and mitochondria. Plays a role in nuclear shape determination. Drives nuclear movement along actin filaments. As component of the SUN-WIP-WIT2-KAKU1 complex, mediates the transfer of cytoplasmic forces to the nuclear envelope (NE), leading to nuclear shape changes. The sequence is that of Myosin-15 (XI-I) from Arabidopsis thaliana (Mouse-ear cress).